The sequence spans 176 residues: Adenine phosphoribosyltransferase (176 aa).

It belongs to the purine/pyrimidine phosphoribosyltransferase family. In terms of assembly, homodimer.

It is found in the cytoplasm. It carries out the reaction AMP + diphosphate = 5-phospho-alpha-D-ribose 1-diphosphate + adenine. The protein operates within purine metabolism; AMP biosynthesis via salvage pathway; AMP from adenine: step 1/1. Catalyzes a salvage reaction resulting in the formation of AMP, that is energically less costly than de novo synthesis. The polypeptide is Adenine phosphoribosyltransferase (Borreliella burgdorferi (strain ZS7) (Borrelia burgdorferi)).